The primary structure comprises 675 residues: Putative L-type lectin-domain containing receptor kinase I.11 (675 aa).

The first 22 residues, 1–22 (MASERLHLILLVFFNHLTFLLS), serve as a signal peptide directing secretion. At 23–292 (QQEEAGFIYN…PKAKQEQTSP (270 aa)) the chain is on the extracellular side. The tract at residues 27-263 (AGFIYNGFGQ…YQYILGWSFS (237 aa)) is legume-lectin like. N-linked (GlcNAc...) asparagine glycans are attached at residues Asn-60, Asn-129, Asn-186, Asn-209, and Asn-230. Residues 293–313 (LLIVLLMLLVLIMLAVLGGIY) traverse the membrane as a helical segment. Over 314–675 (LYRRKKYAEV…THTITYGDGR (362 aa)) the chain is Cytoplasmic. The Protein kinase domain occupies 348–620 (FDKDGRLGKG…QVIQYINQNL (273 aa)). ATP is bound by residues 354–362 (LGKGGFGEV) and Lys-376. Asp-472 functions as the Proton acceptor in the catalytic mechanism.

This sequence in the C-terminal section; belongs to the protein kinase superfamily. Ser/Thr protein kinase family. It in the N-terminal section; belongs to the leguminous lectin family.

Its subcellular location is the cell membrane. It carries out the reaction L-seryl-[protein] + ATP = O-phospho-L-seryl-[protein] + ADP + H(+). It catalyses the reaction L-threonyl-[protein] + ATP = O-phospho-L-threonyl-[protein] + ADP + H(+). The sequence is that of Putative L-type lectin-domain containing receptor kinase I.11 (LECRK111) from Arabidopsis thaliana (Mouse-ear cress).